The following is a 465-amino-acid chain: UDP-N-acetylmuramate--L-alanine ligase (465 aa).

Position 115–121 (115–121) interacts with ATP; the sequence is GTHGKTT.

The protein belongs to the MurCDEF family.

It is found in the cytoplasm. It catalyses the reaction UDP-N-acetyl-alpha-D-muramate + L-alanine + ATP = UDP-N-acetyl-alpha-D-muramoyl-L-alanine + ADP + phosphate + H(+). It participates in cell wall biogenesis; peptidoglycan biosynthesis. In terms of biological role, cell wall formation. The sequence is that of UDP-N-acetylmuramate--L-alanine ligase from Renibacterium salmoninarum (strain ATCC 33209 / DSM 20767 / JCM 11484 / NBRC 15589 / NCIMB 2235).